The primary structure comprises 263 residues: Chaperone protein ClpE (263 aa).

The first 34 residues, 1–34 (MSKRNAVTTFFTNRVTKALGMTLALMMTCQSAMA), serve as a signal peptide directing secretion. The segment covering 238 to 255 (QKKTPTSSGQKASDSLVN) has biased composition (polar residues). Positions 238-263 (QKKTPTSSGQKASDSLVNPSDKADKK) are disordered.

The protein belongs to the periplasmic pilus chaperone family.

The protein localises to the periplasm. Involved in the biogenesis of the CS31A capsule-like antigen. This chain is Chaperone protein ClpE (clpE), found in Escherichia coli.